The sequence spans 185 residues: Elongation factor P (185 aa).

The protein belongs to the elongation factor P family.

It localises to the cytoplasm. It functions in the pathway protein biosynthesis; polypeptide chain elongation. Functionally, involved in peptide bond synthesis. Stimulates efficient translation and peptide-bond synthesis on native or reconstituted 70S ribosomes in vitro. Probably functions indirectly by altering the affinity of the ribosome for aminoacyl-tRNA, thus increasing their reactivity as acceptors for peptidyl transferase. The sequence is that of Elongation factor P from Synechococcus sp. (strain JA-3-3Ab) (Cyanobacteria bacterium Yellowstone A-Prime).